The sequence spans 87 residues: Small ribosomal subunit protein uS17 (87 aa).

Belongs to the universal ribosomal protein uS17 family. In terms of assembly, part of the 30S ribosomal subunit.

One of the primary rRNA binding proteins, it binds specifically to the 5'-end of 16S ribosomal RNA. This chain is Small ribosomal subunit protein uS17, found in Dichelobacter nodosus (strain VCS1703A).